Here is a 216-residue protein sequence, read N- to C-terminus: Uracil phosphoribosyltransferase (216 aa).

5-phospho-alpha-D-ribose 1-diphosphate-binding positions include arginine 85, arginine 110, and 135–143 (DPMVATGYS). Residues isoleucine 200 and 205 to 207 (GDA) each bind uracil. Aspartate 206 serves as a coordination point for 5-phospho-alpha-D-ribose 1-diphosphate.

It belongs to the UPRTase family. Requires Mg(2+) as cofactor.

The catalysed reaction is UMP + diphosphate = 5-phospho-alpha-D-ribose 1-diphosphate + uracil. Its pathway is pyrimidine metabolism; UMP biosynthesis via salvage pathway; UMP from uracil: step 1/1. Its activity is regulated as follows. Allosterically activated by GTP. Catalyzes the conversion of uracil and 5-phospho-alpha-D-ribose 1-diphosphate (PRPP) to UMP and diphosphate. The protein is Uracil phosphoribosyltransferase of Burkholderia vietnamiensis (strain G4 / LMG 22486) (Burkholderia cepacia (strain R1808)).